Reading from the N-terminus, the 265-residue chain is Apolipoprotein A-I (265 aa).

A signal peptide spans 1 to 18; sequence MKAVLLTLAVLFLTGSQA. 2 tandem repeats follow at residues 67 to 88 and 89 to 110. The interval 67–265 is 10 X approximate tandem repeats; the sequence is LKLLDNWDSL…DEASKKLNAQ (199 aa). The residue at position 109 (M109) is a Methionine sulfoxide. The stretch at 111 to 121 is one 3; half-length repeat; the sequence is KDLEEVKQKVQ. Tandem repeats lie at residues 122-142, 144-165, 166-187, 188-209, and 210-230. The 9; half-length repeat unit spans residues 231-241; it reads PALEDLRQGLV. Residues 242–265 form repeat 10; the sequence is PVLESLKVSILAAIDEASKKLNAQ.

This sequence belongs to the apolipoprotein A1/A4/E family. As to quaternary structure, homodimer. Interacts with APOA1BP and CLU. Component of a sperm activating protein complex (SPAP), consisting of APOA1, an immunoglobulin heavy chain, an immunoglobulin light chain and albumin. Interacts with NDRG1. Interacts with SCGB3A2. Interacts with NAXE and YJEFN3. Post-translationally, glycosylated. Palmitoylated. In terms of processing, phosphorylation sites are present in the extracellular medium. In terms of tissue distribution, major protein of plasma HDL, also found in chylomicrons.

It localises to the secreted. Its function is as follows. Participates in the reverse transport of cholesterol from tissues to the liver for excretion by promoting cholesterol efflux from tissues and by acting as a cofactor for the lecithin cholesterol acyltransferase (LCAT). As part of the SPAP complex, activates spermatozoa motility. The chain is Apolipoprotein A-I (APOA1) from Tursiops truncatus (Atlantic bottle-nosed dolphin).